The chain runs to 699 residues: TPR repeat-containing thioredoxin TTL1 (699 aa).

Positions 1–211 (MPKSVKPISE…SSSRSSSTVA (211 aa)) are disordered. The segment covering 9–20 (SESDKLSDHLRD) has biased composition (basic and acidic residues). 2 positions are modified to phosphoserine: serine 39 and serine 42. 2 stretches are compositionally biased toward low complexity: residues 52 to 70 (TTTT…SSGS) and 83 to 135 (RSNS…TSPA). The span at 166 to 182 (SGTGTYGHGSIMRGGGI) shows a compositional bias: gly residues. The span at 195–210 (NSPVNVGSSSRSSSTV) shows a compositional bias: low complexity. TPR repeat units lie at residues 227 to 260 (SEEV…SPTN), 262 to 294 (AYRS…DPNY), 296 to 328 (RAHH…SDPM), 419 to 452 (AYIY…DPRC), 465 to 498 (VARA…DPCN), 499 to 532 (AILY…QPSY), and 534 to 566 (KPLL…LPHD). Residues 605–691 (QFKSAMNLPG…IVCPSKEVLE (87 aa)) enclose the Thioredoxin domain.

Expressed in the root elongation zone, stele, root cap, embryo vascular system, leaf axilar buds, silique abscission zone and guard cells.

Its function is as follows. Involved in responses to osmotic stress and abscisic acid (ABA). May act as a positive regulator of ABA signaling during germination and seedling development under stress. The protein is TPR repeat-containing thioredoxin TTL1 (TTL1) of Arabidopsis thaliana (Mouse-ear cress).